The primary structure comprises 665 residues: Probable potassium transport system protein Kup (665 aa).

Helical transmembrane passes span 15–35 (SFLI…LYVM), 48–68 (ITPD…TLLT), 100–120 (WLII…MLTP), 147–167 (IIII…HFGT), 173–193 (IFGP…IVNL), 219–239 (LGFF…ALYS), 251–271 (LTWP…AAWI), 292–312 (MMPS…AIIA), 348–368 (IYMP…VLYF), 378–398 (YGLS…NYLL), 403–423 (PLPI…SFLI), and 431–451 (KGGF…YIWI).

This sequence belongs to the HAK/KUP transporter (TC 2.A.72) family.

It is found in the cell membrane. The catalysed reaction is K(+)(in) + H(+)(in) = K(+)(out) + H(+)(out). In terms of biological role, transport of potassium into the cell. Likely operates as a K(+):H(+) symporter. This Clostridium perfringens (strain ATCC 13124 / DSM 756 / JCM 1290 / NCIMB 6125 / NCTC 8237 / Type A) protein is Probable potassium transport system protein Kup.